Reading from the N-terminus, the 221-residue chain is Iron-sulfur cluster repair protein YtfE (221 aa).

This sequence belongs to the RIC family. YtfE subfamily. In terms of assembly, homodimer.

The protein localises to the cytoplasm. Its function is as follows. Di-iron-containing protein involved in the repair of iron-sulfur clusters damaged by oxidative and nitrosative stress conditions. The protein is Iron-sulfur cluster repair protein YtfE of Dickeya chrysanthemi (strain Ech1591) (Dickeya zeae (strain Ech1591)).